A 204-amino-acid polypeptide reads, in one-letter code: Carbon disulfide hydrolase (204 aa).

Cysteine 35, histidine 88, and cysteine 91 together coordinate Zn(2+).

It belongs to the beta-class carbonic anhydrase family. As to quaternary structure, forms a hexadecameric catenane homooligomer, through interactions of two interlocked octameric rings. Exists as both octamers and hexadecamers in solution. Requires Zn(2+) as cofactor.

It catalyses the reaction carbon disulfide + 2 H2O = 2 hydrogen sulfide + CO2 + 2 H(+). Its pathway is sulfur metabolism; hydrogen sulfide biosynthesis. Its function is as follows. Catalyzes the conversion of carbon disulfide into hydrogen sulfide and carbon dioxide, with carbonyl sulfide as an intermediate. Likely plays a key role in sulfur metabolism that allows Acidianus sp. A1-3 to grow on carbon disulfide as the main carbon and energy source. Does not show carbonic anhydrase activity (hydration of CO(2) to carbonate). The protein is Carbon disulfide hydrolase of Acidianus sp. (strain A1-3).